A 626-amino-acid chain; its full sequence is Conserved oligomeric Golgi complex subunit 8 (626 aa).

Positions 580–598 (PAPAPALPPNAPSPEPVTP) are enriched in pro residues. The interval 580–626 (PAPAPALPPNAPSPEPVTPVTPAVPDAGQEEVESAGPPQPDEPSAGI) is disordered.

The protein belongs to the COG8 family. As to quaternary structure, component of the conserved oligomeric Golgi complex which is composed of eight different subunits and is required for normal Golgi morphology and localization.

The protein resides in the golgi apparatus membrane. Required for normal Golgi function. In Bos taurus (Bovine), this protein is Conserved oligomeric Golgi complex subunit 8 (COG8).